A 430-amino-acid polypeptide reads, in one-letter code: Glutamate-1-semialdehyde 2,1-aminomutase (430 aa).

At Lys267 the chain carries N6-(pyridoxal phosphate)lysine.

Belongs to the class-III pyridoxal-phosphate-dependent aminotransferase family. HemL subfamily. Homodimer. Pyridoxal 5'-phosphate is required as a cofactor.

It is found in the cytoplasm. It catalyses the reaction (S)-4-amino-5-oxopentanoate = 5-aminolevulinate. Its pathway is porphyrin-containing compound metabolism; protoporphyrin-IX biosynthesis; 5-aminolevulinate from L-glutamyl-tRNA(Glu): step 2/2. In Sulfurovum sp. (strain NBC37-1), this protein is Glutamate-1-semialdehyde 2,1-aminomutase.